The chain runs to 763 residues: G protein-regulated inducer of neurite outgrowth 3 (763 aa).

3 disordered regions span residues 1–48 (MGTV…IGNV), 65–111 (QACV…APGL), and 192–268 (ENSQ…GATC). Positions 27 to 44 (ESQSVSPQPAQPDNNASG) are enriched in polar residues. Positions 93-104 (KTPDDFLLHGSK) are enriched in basic and acidic residues. Residues 237-250 (ENKQPSATALNTTA) are compositionally biased toward polar residues. Phosphoserine is present on residues Ser323 and Ser359. 3 disordered regions span residues 420 to 452 (TSSQ…PDFQ), 471 to 624 (NQGL…PRRG), and 711 to 737 (VKTQ…GRQH). The segment covering 437 to 450 (KEATSRQPEGTNPD) has biased composition (polar residues). Composition is skewed to basic and acidic residues over residues 480–496 (REPE…KAES) and 518–539 (PTDK…KDHA). Over residues 593 to 609 (SLSLPSDGTGDSSPGSG) the composition is skewed to low complexity.

May be involved in neurite outgrowth. The protein is G protein-regulated inducer of neurite outgrowth 3 (Gprin3) of Mus musculus (Mouse).